Here is a 358-residue protein sequence, read N- to C-terminus: Mannonate dehydratase (358 aa).

This sequence belongs to the mannonate dehydratase family. The cofactor is Fe(2+). Mn(2+) serves as cofactor.

The catalysed reaction is D-mannonate = 2-dehydro-3-deoxy-D-gluconate + H2O. It participates in carbohydrate metabolism; pentose and glucuronate interconversion. Catalyzes the dehydration of D-mannonate. This Lachnoclostridium phytofermentans (strain ATCC 700394 / DSM 18823 / ISDg) (Clostridium phytofermentans) protein is Mannonate dehydratase.